The following is a 160-amino-acid chain: Cytochrome b6-f complex subunit 4 (160 aa).

A run of 3 helical transmembrane segments spans residues 36–56, 95–115, and 131–151; these read LLYI…GLAV, LLGI…PFIE, and SVFL…CLPI.

This sequence belongs to the cytochrome b family. PetD subfamily. As to quaternary structure, the 4 large subunits of the cytochrome b6-f complex are cytochrome b6, subunit IV (17 kDa polypeptide, PetD), cytochrome f and the Rieske protein, while the 4 small subunits are PetG, PetL, PetM and PetN. The complex functions as a dimer.

Its subcellular location is the cellular thylakoid membrane. Functionally, component of the cytochrome b6-f complex, which mediates electron transfer between photosystem II (PSII) and photosystem I (PSI), cyclic electron flow around PSI, and state transitions. This Prochlorococcus marinus subsp. pastoris (strain CCMP1986 / NIES-2087 / MED4) protein is Cytochrome b6-f complex subunit 4.